Reading from the N-terminus, the 117-residue chain is Large ribosomal subunit protein bL20 (117 aa).

Belongs to the bacterial ribosomal protein bL20 family.

Its function is as follows. Binds directly to 23S ribosomal RNA and is necessary for the in vitro assembly process of the 50S ribosomal subunit. It is not involved in the protein synthesizing functions of that subunit. The sequence is that of Large ribosomal subunit protein bL20 from Roseiflexus castenholzii (strain DSM 13941 / HLO8).